The primary structure comprises 197 residues: Chitin synthase 3 (197 aa).

The protein belongs to the chitin synthase family. Class III subfamily.

Its subcellular location is the cell membrane. The enzyme catalyses [(1-&gt;4)-N-acetyl-beta-D-glucosaminyl](n) + UDP-N-acetyl-alpha-D-glucosamine = [(1-&gt;4)-N-acetyl-beta-D-glucosaminyl](n+1) + UDP + H(+). Its function is as follows. Polymerizes chitin, a structural polymer of the cell wall and septum, by transferring the sugar moiety of UDP-GlcNAc to the non-reducing end of the growing chitin polymer. The polypeptide is Chitin synthase 3 (CHS3) (Exophiala jeanselmei (Dematiaceous fungus)).